A 79-amino-acid polypeptide reads, in one-letter code: TAMFLAMHYTSDIATAFSSVAHICRDVNYGWLIRNMHANGASFFFICIYLHIGRGLYYGSYLYKETWNVGVILLLLTMM.

Helical transmembrane passes span 1-7, 31-52, and 67-79; these read TAMFLAM, WLIR…YLHI, and WNVG…LTMM. The heme b site is built by histidine 37 and histidine 51.

This sequence belongs to the cytochrome b family. The cytochrome bc1 complex contains 3 respiratory subunits (MT-CYB, CYC1 and UQCRFS1), 2 core proteins (UQCRC1 and UQCRC2) and probably 6 low-molecular weight proteins. Requires heme b as cofactor.

It is found in the mitochondrion inner membrane. Its function is as follows. Component of the ubiquinol-cytochrome c reductase complex (complex III or cytochrome b-c1 complex) that is part of the mitochondrial respiratory chain. The b-c1 complex mediates electron transfer from ubiquinol to cytochrome c. Contributes to the generation of a proton gradient across the mitochondrial membrane that is then used for ATP synthesis. This is Cytochrome b (mt-cyb) from Hypsophrys nicaraguensis (Moga).